The primary structure comprises 431 residues: Glutamyl-tRNA reductase (431 aa).

Substrate contacts are provided by residues 49–52 (TCNR), Ser109, 114–116 (EGQ), and Gln120. The Nucleophile role is filled by Cys50. 189-194 (GAGKMA) provides a ligand contact to NADP(+).

This sequence belongs to the glutamyl-tRNA reductase family. Homodimer.

The enzyme catalyses (S)-4-amino-5-oxopentanoate + tRNA(Glu) + NADP(+) = L-glutamyl-tRNA(Glu) + NADPH + H(+). It functions in the pathway porphyrin-containing compound metabolism; protoporphyrin-IX biosynthesis; 5-aminolevulinate from L-glutamyl-tRNA(Glu): step 1/2. Its pathway is porphyrin-containing compound metabolism; chlorophyll biosynthesis. Catalyzes the NADPH-dependent reduction of glutamyl-tRNA(Glu) to glutamate 1-semialdehyde (GSA). This Synechococcus sp. (strain JA-3-3Ab) (Cyanobacteria bacterium Yellowstone A-Prime) protein is Glutamyl-tRNA reductase.